Consider the following 222-residue polypeptide: MKKHLLALGLLLVGVSPAQALDVGDISSFMNSGSSTLSKTIKNSTDSGRLINIHLERLSSPLDGGQVIPMDKPDEVLLTPASLLLPAQASDVIRFFYKGPADDKERYYRIVWFDQALSDAQRDNANRSAVATASARIGTILVVAPRQVNYRFQYANGSLTNTGNATLRILAYGPCLKAADGKECKENYYLMPGKSRRFTQVDTANKKGRVALWQGEQFVPVK.

The N-terminal stretch at 1-20 is a signal peptide; the sequence is MKKHLLALGLLLVGVSPAQA.

This sequence belongs to the EcpB/EcpE family.

Part of the ecpRABCDE operon, which encodes the E.coli common pilus (ECP). ECP plays a dual role in early-stage biofilm development and host cell recognition. This chain is Probable fimbrial chaperone EcpB (ecpB), found in Klebsiella pneumoniae (strain 342).